The primary structure comprises 223 residues: Lipoprotein signal peptidase (223 aa).

The interval methionine 1–serine 20 is disordered. Transmembrane regions (helical) follow at residues leucine 32–phenylalanine 52, tryptophan 65–leucine 85, leucine 91–phenylalanine 111, and serine 116–aspartate 136. Catalysis depends on residues aspartate 156 and aspartate 175. The helical transmembrane segment at isoleucine 173–proline 193 threads the bilayer. Positions proline 196 to serine 223 are disordered.

Belongs to the peptidase A8 family.

It localises to the cell inner membrane. It catalyses the reaction Release of signal peptides from bacterial membrane prolipoproteins. Hydrolyzes -Xaa-Yaa-Zaa-|-(S,diacylglyceryl)Cys-, in which Xaa is hydrophobic (preferably Leu), and Yaa (Ala or Ser) and Zaa (Gly or Ala) have small, neutral side chains.. It participates in protein modification; lipoprotein biosynthesis (signal peptide cleavage). Functionally, this protein specifically catalyzes the removal of signal peptides from prolipoproteins. The polypeptide is Lipoprotein signal peptidase (Rhodopirellula baltica (strain DSM 10527 / NCIMB 13988 / SH1)).